Consider the following 152-residue polypeptide: Protein SprT-like (152 aa).

The SprT-like domain maps to 7 to 148 (QRLVEEVSLQ…GKCKGKLILI (142 aa)). His-67 contacts Zn(2+). The active site involves Glu-68. His-71 serves as a coordination point for Zn(2+).

It belongs to the SprT family. The cofactor is Zn(2+).

It is found in the cytoplasm. This chain is Protein SprT-like, found in Bacillus cereus (strain AH187).